Consider the following 141-residue polypeptide: UPF0310 protein SGO_1818 (141 aa).

This sequence belongs to the UPF0310 family.

This chain is UPF0310 protein SGO_1818, found in Streptococcus gordonii (strain Challis / ATCC 35105 / BCRC 15272 / CH1 / DL1 / V288).